The primary structure comprises 82 residues: Small ribosomal subunit protein uS17 (82 aa).

The protein belongs to the universal ribosomal protein uS17 family. In terms of assembly, part of the 30S ribosomal subunit.

Its function is as follows. One of the primary rRNA binding proteins, it binds specifically to the 5'-end of 16S ribosomal RNA. The polypeptide is Small ribosomal subunit protein uS17 (Paracoccus denitrificans (strain Pd 1222)).